Consider the following 644-residue polypeptide: MSSLGTEQFSERSQWVLNSPNPPPLTKKFLGPLKDNKFFTSSSSKKETRAVSFLASLFPILSWIRTYSATKFKDDLLSGLTLASLSIPQSIGYANLAKLDPQYGLYTSVIPPVIYALMGSSREIAIGPVAVVSMLLSSLVPKVIDPDAHPNDYRNLVFTVTLFAGIFQTAFGVLRLGFLVDFLSHAALVGFMAGAAIVIGLQQLKGLLGLTHFTTKTDAVAVLKSVYTSLHQQITSSENWSPLNFVIGCSFLIFLLAARFIGRRNKKFFWLPAIAPLLSVILSTLIVFLSKGDKHGVNIIKHVQGGLNPSSVHKLQLNGPHVGQAAKIGLISAIIALTEAIAVGRSFANIKGYHLDGNKEMLAMGCMNIAGSLTSCYVSTGSFSRTAVNFSAGCKTAVSNIVMAVTVLLCLELFTRLLYYTPMAILASIILSALPGLIDIGEAYHIWKVDKFDFLACLGAFFGVLFVSIEIGLLIALSISFAKILLQAIRPGVEVLGRIPTTEAYCDVAQYPMAVTTPGILVIRISSGSLCFANAGFVRERILKWVEDEEQDNIEEAAKGRVQAIIIDMTDLTNVDTSGILALEELHKKLLSRGVELAMVNPRWEVIHKLKVANFVDKIGKERVFLTVAEAVDACLSSRFANSA.

Residues 1 to 19 (MSSLGTEQFSERSQWVLNS) show a composition bias toward polar residues. Residues 1–20 (MSSLGTEQFSERSQWVLNSP) are disordered. 13 consecutive transmembrane segments (helical) span residues 50–70 (AVSF…YSAT), 76–96 (LLSG…YANL), 99–119 (LDPQ…ALMG), 124–144 (IAIG…PKVI), 156–176 (LVFT…VLRL), 179–199 (LVDF…AIVI), 242–262 (PLNF…RFIG), 268–288 (FFWL…LIVF), 328–348 (IGLI…RSFA), 394–414 (CKTA…LELF), 418–438 (LYYT…PGLI), 455–475 (LACL…GLLI), and 518–538 (PGIL…AGFV). The region spanning 511 to 635 (YPMAVTTPGI…LTVAEAVDAC (125 aa)) is the STAS domain.

The protein belongs to the SLC26A/SulP transporter (TC 2.A.53) family.

The protein localises to the membrane. Functionally, low-affinity H(+)/sulfate cotransporter which may be involved in the internal transport of sulfate between cellular or subcellular compartments within the plant. The chain is Low affinity sulfate transporter 3 (ST3) from Stylosanthes hamata (Caribbean stylo).